Reading from the N-terminus, the 156-residue chain is Small ribosomal subunit protein uS7 (156 aa).

It belongs to the universal ribosomal protein uS7 family. As to quaternary structure, part of the 30S ribosomal subunit. Contacts proteins S9 and S11.

Its function is as follows. One of the primary rRNA binding proteins, it binds directly to 16S rRNA where it nucleates assembly of the head domain of the 30S subunit. Is located at the subunit interface close to the decoding center, probably blocks exit of the E-site tRNA. This Nitrosomonas eutropha (strain DSM 101675 / C91 / Nm57) protein is Small ribosomal subunit protein uS7.